Consider the following 298-residue polypeptide: Acetylglutamate kinase (298 aa).

Substrate-binding positions include 69–70 (GG), arginine 91, and asparagine 191.

The protein belongs to the acetylglutamate kinase family. ArgB subfamily.

It localises to the cytoplasm. It carries out the reaction N-acetyl-L-glutamate + ATP = N-acetyl-L-glutamyl 5-phosphate + ADP. The protein operates within amino-acid biosynthesis; L-arginine biosynthesis; N(2)-acetyl-L-ornithine from L-glutamate: step 2/4. In terms of biological role, catalyzes the ATP-dependent phosphorylation of N-acetyl-L-glutamate. The chain is Acetylglutamate kinase from Neisseria meningitidis serogroup A / serotype 4A (strain DSM 15465 / Z2491).